Reading from the N-terminus, the 255-residue chain is MFSSSVSISILVVVAMQFSFIHNVLSLNQTNSYLQHICINSEGKYKAKNSYESRLKDHLDSMSNILDYGFIHGVGGADSSTYYIKAQCRGDASESKCRSCLFTAFSGILRRCPNNRGRIIWYDNCFLYISEIYTYEKIDFKHYLYLHNAKDVSGNKKLFNKNTKALLDKLKEKAIRKEQEPYTRDYMYAAGEESLGTTKLYGMMQCTQDLSVKNCSVCLDSIIAKLPRCCNGKQGGRVLNPSCTFRYELYPFVKP.

A signal peptide spans 1–26; the sequence is MFSSSVSISILVVVAMQFSFIHNVLS. 2 Gnk2-homologous domains span residues 33–134 and 140–252; these read YLQH…EIYT and FKHY…LYPF.

The protein belongs to the cysteine-rich repeat secretory protein family.

It is found in the secreted. The protein is Putative cysteine-rich repeat secretory protein 10 (CRRSP10) of Arabidopsis thaliana (Mouse-ear cress).